The chain runs to 331 residues: Reticulocalbin-1 (331 aa).

The N-terminal stretch at 1–29 (MARGGRGRRLGLALGLLLALVLAPRVLRA) is a signal peptide. Residue N53 is glycosylated (N-linked (GlcNAc...) asparagine). S55 carries the post-translational modification Phosphoserine. Phosphothreonine is present on T76. EF-hand domains lie at 79–114 (ESKE…VQKR), 115–150 (YIFD…YYLG), 166–201 (KMLP…EEFE), 203–238 (MKEI…HEEN), 244–279 (WVLS…QDYD), and 280–315 (HAQA…FVGS). S80 carries the phosphoserine; by FAM20C modification. Ca(2+) is bound by residues D92, D94, D96, E103, D128, D130, D132, K134, E139, D179, N181, D183, T185, E190, D216, N218, D220, E227, D257, N259, D261, K263, E268, D293, N295, D297, K299, and E304. The Prevents secretion from ER signature appears at 328 to 331 (HDEL).

This sequence belongs to the CREC family. Post-translationally, O-glycosylated. O-mannosylated by POMT1 and POMT2 and elongated by POMGNT1.

It localises to the endoplasmic reticulum lumen. Functionally, may regulate calcium-dependent activities in the endoplasmic reticulum lumen or post-ER compartment. In Homo sapiens (Human), this protein is Reticulocalbin-1 (RCN1).